The following is a 362-amino-acid chain: Phosphoserine aminotransferase (362 aa).

Positions 9 and 42 each coordinate L-glutamate. Residues 76-77 (GR), Trp102, Thr153, Asp174, and Gln197 contribute to the pyridoxal 5'-phosphate site. Lys198 bears the N6-(pyridoxal phosphate)lysine mark. 239–240 (NT) lines the pyridoxal 5'-phosphate pocket.

This sequence belongs to the class-V pyridoxal-phosphate-dependent aminotransferase family. SerC subfamily. Homodimer. Pyridoxal 5'-phosphate serves as cofactor.

The protein resides in the cytoplasm. It catalyses the reaction O-phospho-L-serine + 2-oxoglutarate = 3-phosphooxypyruvate + L-glutamate. The catalysed reaction is 4-(phosphooxy)-L-threonine + 2-oxoglutarate = (R)-3-hydroxy-2-oxo-4-phosphooxybutanoate + L-glutamate. It functions in the pathway amino-acid biosynthesis; L-serine biosynthesis; L-serine from 3-phospho-D-glycerate: step 2/3. It participates in cofactor biosynthesis; pyridoxine 5'-phosphate biosynthesis; pyridoxine 5'-phosphate from D-erythrose 4-phosphate: step 3/5. Catalyzes the reversible conversion of 3-phosphohydroxypyruvate to phosphoserine and of 3-hydroxy-2-oxo-4-phosphonooxybutanoate to phosphohydroxythreonine. This Klebsiella pneumoniae (strain 342) protein is Phosphoserine aminotransferase.